Reading from the N-terminus, the 158-residue chain is Cytochrome b562 (158 aa).

The next 4 membrane-spanning stretches (helical) occupy residues 12–32 (ITLHWAIAGLVLFNYIFGETM), 46–66 (AGVGHYLHVVVGLAVLVLTLV), 87–107 (VAAGLQGLLYLLTLLVPALGM), and 121–141 (HVLAANAIMLLALVHAVSALF). Heme b is bound by residues His15 and His53. Heme b-binding residues include His121 and His135.

The protein belongs to the cytochrome b561 family. In terms of assembly, homodimer. Heme b is required as a cofactor.

It localises to the cell membrane. In terms of biological role, cytochrome b562 is an integral component of the cytochrome b-c1 complex in the cyclic electron transfer system of photosynthetic bacteria. The chain is Cytochrome b562 from Cereibacter sphaeroides (strain ATCC 17023 / DSM 158 / JCM 6121 / CCUG 31486 / LMG 2827 / NBRC 12203 / NCIMB 8253 / ATH 2.4.1.) (Rhodobacter sphaeroides).